The chain runs to 87 residues: Translation initiation factor IF-1 2 (87 aa).

An S1-like domain is found at 1-72 (MAADDHIEME…TKGRIARRTT (72 aa)). The tract at residues 65 to 87 (GRIARRTTTPSGGPRPARSGNRR) is disordered.

The protein belongs to the IF-1 family. Component of the 30S ribosomal translation pre-initiation complex which assembles on the 30S ribosome in the order IF-2 and IF-3, IF-1 and N-formylmethionyl-tRNA(fMet); mRNA recruitment can occur at any time during PIC assembly.

It localises to the cytoplasm. In terms of biological role, one of the essential components for the initiation of protein synthesis. Stabilizes the binding of IF-2 and IF-3 on the 30S subunit to which N-formylmethionyl-tRNA(fMet) subsequently binds. Helps modulate mRNA selection, yielding the 30S pre-initiation complex (PIC). Upon addition of the 50S ribosomal subunit IF-1, IF-2 and IF-3 are released leaving the mature 70S translation initiation complex. The chain is Translation initiation factor IF-1 2 from Nitratidesulfovibrio vulgaris (strain ATCC 29579 / DSM 644 / CCUG 34227 / NCIMB 8303 / VKM B-1760 / Hildenborough) (Desulfovibrio vulgaris).